The following is a 2477-amino-acid chain: Non-reducing polyketide synthase mapC (2477 aa).

Residues 14–269 (LLFGPQCSEI…HQQTHREGIQ (256 aa)) form an N-terminal acylcarrier protein transacylase domain (SAT) region. The 418-residue stretch at 403-820 (MPPIAITGMA…GSNAALIVRD (418 aa)) folds into the Ketosynthase family 3 (KS3) domain. Catalysis depends on for beta-ketoacyl synthase activity residues C568, H703, and H742. Positions 930 to 1233 (LCFGGQNGVT…HRVNLDGSDG (304 aa)) are malonyl-CoA:ACP transacylase (MAT) domain. S1017 serves as the catalytic For acyl/malonyl transferase activity. Residues 1302 to 1435 (QERAGLLRKL…GSVSLCNERS (134 aa)) are N-terminal hotdog fold. The PKS/mFAS DH domain occupies 1302-1612 (QERAGLLRKL…FMSVSIRSLT (311 aa)). Residues 1307–1611 (LLRKLSDGPE…RFMSVSIRSL (305 aa)) form a product template (PT) domain region. H1336 (proton acceptor; for dehydratase activity) is an active-site residue. A C-terminal hotdog fold region spans residues 1461-1612 (ASNGLKGSTV…FMSVSIRSLT (152 aa)). Residue D1518 is the Proton donor; for dehydratase activity of the active site. One can recognise a Carrier domain in the interval 1651 to 1725 (DSDLVAVQEM…GLTEHIFPGH (75 aa)). The residue at position 1685 (S1685) is an O-(pantetheine 4'-phosphoryl)serine. The methyltransferase (CMeT) domain stretch occupies residues 1882 to 2117 (PYALEHDLLQ…GFEWVGWTNN (236 aa)). Catalysis depends on for thioesterase activity residues S2267 and D2421.

The protein resides in the cytoplasm. Its subcellular location is the cytosol. It catalyses the reaction 3 malonyl-CoA + acetyl-CoA + S-adenosyl-L-methionine + H(+) = 5-methylorsellinate + S-adenosyl-L-homocysteine + 3 CO2 + 4 CoA. It functions in the pathway secondary metabolite biosynthesis; terpenoid biosynthesis. Functionally, non-reducing polyketide synthase; part of the gene cluster that mediates the biosynthesis of mycophenolic acid (MPA), the first isolated antibiotic natural product in the world obtained from a culture of Penicillium brevicompactum in 1893. MpaC catalyzes the synthesis of 5-methylorsellinic acid (5MOA) via the condensation of 1 acetyl-CoA starter unit with 3 malonyl-CoA units and one methylation step. The first step of the pathway is the synthesis of 5-methylorsellinic acid (5MOA) by the cytosolic polyketide synthase mpaC. 5MOA is then converted to the phthalide compound 5,7-dihydroxy-4,6-dimethylphthalide (DHMP) by the endoplasmic reticulum-bound cytochrome P450 monooxygenase mpaDE. MpaDE first catalyzes hydroxylation of 5-MOA to 4,6-dihydroxy-2-(hydroxymethyl)-3-methylbenzoic acid (DHMB). MpaDE then acts as a lactone synthase that catalyzes the ring closure to convert DHMB into DHMP. The next step is the prenylation of DHMP by the Golgi apparatus-associated prenyltransferase mpaA to yield farnesyl-DHMP (FDHMP). The ER-bound oxygenase mpaB then mediates the oxidative cleavage the C19-C20 double bond in FDHMP to yield FDHMP-3C via a mycophenolic aldehyde intermediate. The O-methyltransferase mpaG catalyzes the methylation of FDHMP-3C to yield MFDHMP-3C. After the cytosolic methylation of FDHMP-3C, MFDHMP-3C enters into peroxisomes probably via free diffusion due to its low molecular weight. Upon a peroxisomal CoA ligation reaction, catalyzed by a beta-oxidation component enzyme acyl-CoA ligase ACL891, MFDHMP-3C-CoA would then be restricted to peroxisomes for the following beta-oxidation pathway steps. The peroxisomal beta-oxidation machinery than converts MFDHMP-3C-CoA into MPA_CoA, via a beta-oxidation chain-shortening process. Finally mpaH acts as a peroxisomal acyl-CoA hydrolase with high substrate specificity toward MPA-CoA to release the final product MPA. This Penicillium roqueforti (strain FM164) protein is Non-reducing polyketide synthase mapC.